Consider the following 449-residue polypeptide: Tubulin alpha-1C chain (449 aa).

The MREC motif signature appears at Met1–Cys4. Gln11 serves as a coordination point for GTP. Lys40 bears the N6-acetyllysine mark. The GTP site is built by Glu71, Ser140, Gly144, Thr145, Thr179, Asn206, and Asn228. Glu71 lines the Mg(2+) pocket. Glu254 is a catalytic residue. The residue at position 282 (Tyr282) is a 3'-nitrotyrosine. Tyr432 carries the post-translational modification Phosphotyrosine. At Ser439 the chain carries Phosphoserine. Tyr449 is modified (3'-nitrotyrosine).

It belongs to the tubulin family. As to quaternary structure, dimer of alpha and beta chains. A typical microtubule is a hollow water-filled tube with an outer diameter of 25 nm and an inner diameter of 15 nM. Alpha-beta heterodimers associate head-to-tail to form protofilaments running lengthwise along the microtubule wall with the beta-tubulin subunit facing the microtubule plus end conferring a structural polarity. Microtubules usually have 13 protofilaments but different protofilament numbers can be found in some organisms and specialized cells. The cofactor is Mg(2+). In terms of processing, some glutamate residues at the C-terminus are polyglycylated, resulting in polyglycine chains on the gamma-carboxyl group. Glycylation is mainly limited to tubulin incorporated into axonemes (cilia and flagella) whereas glutamylation is prevalent in neuronal cells, centrioles, axonemes, and the mitotic spindle. Both modifications can coexist on the same protein on adjacent residues, and lowering polyglycylation levels increases polyglutamylation, and reciprocally. Cilia and flagella glycylation is required for their stability and maintenance. Flagella glycylation controls sperm motility. Some glutamate residues at the C-terminus are polyglutamylated, resulting in polyglutamate chains on the gamma-carboxyl group. Polyglutamylation plays a key role in microtubule severing by spastin (SPAST). SPAST preferentially recognizes and acts on microtubules decorated with short polyglutamate tails: severing activity by SPAST increases as the number of glutamates per tubulin rises from one to eight, but decreases beyond this glutamylation threshold. Glutamylation is also involved in cilia motility. Post-translationally, acetylation of alpha chains at Lys-40 is located inside the microtubule lumen. This modification has been correlated with increased microtubule stability, intracellular transport and ciliary assembly. In terms of processing, methylation of alpha chains at Lys-40 is found in mitotic microtubules and is required for normal mitosis and cytokinesis contributing to genomic stability. Nitration of Tyr-449 is irreversible and interferes with normal dynein intracellular distribution. Post-translationally, undergoes a tyrosination/detyrosination cycle, the cyclic removal and re-addition of a C-terminal tyrosine residue by the enzymes tubulin tyrosine carboxypeptidase (MATCAP1, VASH1 or VASH2) and tubulin tyrosine ligase (TTL), respectively. In terms of processing, tyrosination promotes microtubule interaction with CAP-Gly domain-containing proteins such as CLIP1, CLIP2 and DCTN1. Tyrosination regulates the initiation of dynein-dynactin motility via interaction with DCTN1, which brings the dynein-dynactin complex into contact with microtubules. In neurons, tyrosinated tubulins mediate the initiation of retrograde vesicle transport. Detyrosination is involved in metaphase plate congression by guiding chromosomes during mitosis: detyrosination promotes interaction with CENPE, promoting pole-proximal transport of chromosomes toward the equator. Detyrosination increases microtubules-dependent mechanotransduction in dystrophic cardiac and skeletal muscle. In cardiomyocytes, detyrosinated microtubules are required to resist to contractile compression during contraction: detyrosination promotes association with desmin (DES) at force-generating sarcomeres, leading to buckled microtubules and mechanical resistance to contraction. Minor alpha-tubulin expressed in all tissues.

It localises to the cytoplasm. The protein resides in the cytoskeleton. It catalyses the reaction GTP + H2O = GDP + phosphate + H(+). In terms of biological role, tubulin is the major constituent of microtubules, a cylinder consisting of laterally associated linear protofilaments composed of alpha- and beta-tubulin heterodimers. Microtubules grow by the addition of GTP-tubulin dimers to the microtubule end, where a stabilizing cap forms. Below the cap, tubulin dimers are in GDP-bound state, owing to GTPase activity of alpha-tubulin. The chain is Tubulin alpha-1C chain (Tuba1c) from Mus musculus (Mouse).